Here is a 670-residue protein sequence, read N- to C-terminus: Zinc finger protein 526 (670 aa).

C2H2-type zinc fingers lie at residues 57-79 (FMCSECGSLYNTLEEVLSHQEQH), 108-130 (FQCGECSQLILSPGELLAHQDAH), and 140-163 (YQCWDCQELFPSPELWVAHRKAQH). Disordered stretches follow at residues 168-196 (VAEPPVPPPLPPPTPLPPPSPPSEVKMEP) and 217-304 (GTHF…ATHP). Residues 171-189 (PPVPPPLPPPTPLPPPSPP) show a composition bias toward pro residues. The C2H2-type 4 zinc-finger motif lies at 197–219 (YECPECSTLCATPEEFLEHQGTH). Basic and acidic residues predominate over residues 217–231 (GTHFDSLEKEERNGL). Acidic residues predominate over residues 232–263 (EEEEEDDEEDEEDDEEMEDEEAMAEVGDDAVG). 9 consecutive C2H2-type zinc fingers follow at residues 305–327 (FHCSQCQRSFSSANRLQAHGRAH), 332–354 (HECTTCSKVFKKAASLEQHLRLH), 360–382 (YLCVDCGRGFGTELTLVAHRRAH), 388–409 (HRCRCGKTFSNMTKFLYHRRTH), 442–465 (LPCPQCSKSFASASRLSRHRRAVH), 472–494 (HRCGVCGKGFKKLIHVRNHLRTH), 500–522 (FQCHSCGKTFASLANLSRHQLTH), 528–550 (YQCLDCGKRFTQSSNLQQHRRLH), and 573–595 (YYCGTCGRWFRAMAGLRLHQRVH). The segment at 409–443 (HAGKSGAPPTGATAPPAPAEPTPPPPPPAPPAQLP) is disordered. Over residues 423–442 (PPAPAEPTPPPPPPAPPAQL) the composition is skewed to pro residues. The segment at 601–621 (LTLQPPRSPSPAPPPPPEPQQ) is disordered. The span at 606-619 (PRSPSPAPPPPPEP) shows a compositional bias: pro residues.

Belongs to the krueppel C2H2-type zinc-finger protein family. As to expression, widely expressed.

Its subcellular location is the nucleus. May be involved in transcriptional regulation. The sequence is that of Zinc finger protein 526 (ZNF526) from Homo sapiens (Human).